Reading from the N-terminus, the 386-residue chain is Ovalbumin (386 aa).

Residue G2 is modified to N-acetylglycine. A signal peptide (not cleaved) is located at residues 22–48 (HHANENIFYCPIAIMSALAMVYLGAKD). Phosphoserine is present on S69. An intrachain disulfide couples C74 to C121. Ca(2+) is bound at residue E192. A glycan (N-linked (GlcNAc...) asparagine) is linked at N293. S345 carries the post-translational modification Phosphoserine.

This sequence belongs to the serpin family. Ov-serpin subfamily. Homodimer. Undergoes proteolytic cleavage first at the canonical P1-P1' site, and then at the P8-P7 site by subtilisin. Major protein of egg white. Expressed in the magnum of the oviduct (at protein level).

Its subcellular location is the secreted. In terms of biological role, non-inhibitory serpin. Storage protein of egg white. This Gallus gallus (Chicken) protein is Ovalbumin (SERPINB14).